Reading from the N-terminus, the 182-residue chain is ATP-dependent protease subunit HslV (182 aa).

Thr-7 is a catalytic residue. Na(+) contacts are provided by Gly-162, Cys-165, and Thr-168.

It belongs to the peptidase T1B family. HslV subfamily. As to quaternary structure, a double ring-shaped homohexamer of HslV is capped on each side by a ring-shaped HslU homohexamer. The assembly of the HslU/HslV complex is dependent on binding of ATP.

Its subcellular location is the cytoplasm. It catalyses the reaction ATP-dependent cleavage of peptide bonds with broad specificity.. With respect to regulation, allosterically activated by HslU binding. In terms of biological role, protease subunit of a proteasome-like degradation complex believed to be a general protein degrading machinery. The polypeptide is ATP-dependent protease subunit HslV (Legionella pneumophila subsp. pneumophila (strain Philadelphia 1 / ATCC 33152 / DSM 7513)).